Reading from the N-terminus, the 530-residue chain is Autoinducer-2 kinase (530 aa).

Belongs to the FGGY kinase family.

The protein localises to the cytoplasm. It catalyses the reaction (S)-4,5-dihydroxypentane-2,3-dione + ATP = (2S)-2-hydroxy-3,4-dioxopentyl phosphate + ADP + H(+). Functionally, catalyzes the phosphorylation of autoinducer-2 (AI-2) to phospho-AI-2, which subsequently inactivates the transcriptional regulator LsrR and leads to the transcription of the lsr operon. Phosphorylates the ring-open form of (S)-4,5-dihydroxypentane-2,3-dione (DPD), which is the precursor to all AI-2 signaling molecules, at the C5 position. In Escherichia coli O9:H4 (strain HS), this protein is Autoinducer-2 kinase.